The following is a 255-amino-acid chain: Hydroxyacylglutathione hydrolase (255 aa).

The Zn(2+) site is built by histidine 55, histidine 57, aspartate 59, histidine 60, histidine 111, aspartate 131, and histidine 169.

This sequence belongs to the metallo-beta-lactamase superfamily. Glyoxalase II family. As to quaternary structure, monomer. It depends on Zn(2+) as a cofactor.

The catalysed reaction is an S-(2-hydroxyacyl)glutathione + H2O = a 2-hydroxy carboxylate + glutathione + H(+). Its pathway is secondary metabolite metabolism; methylglyoxal degradation; (R)-lactate from methylglyoxal: step 2/2. Functionally, thiolesterase that catalyzes the hydrolysis of S-D-lactoyl-glutathione to form glutathione and D-lactic acid. This chain is Hydroxyacylglutathione hydrolase, found in Chromohalobacter salexigens (strain ATCC BAA-138 / DSM 3043 / CIP 106854 / NCIMB 13768 / 1H11).